A 777-amino-acid polypeptide reads, in one-letter code: Protein translocase subunit SecA (777 aa).

Residues Gln-94, 112-116, and Asp-501 each bind ATP; that span reads GEGKT.

Belongs to the SecA family. In terms of assembly, monomer and homodimer. Part of the essential Sec protein translocation apparatus which comprises SecA, SecYEG and auxiliary proteins SecDF. Other proteins may also be involved.

The protein resides in the cell membrane. Its subcellular location is the cytoplasm. It carries out the reaction ATP + H2O + cellular proteinSide 1 = ADP + phosphate + cellular proteinSide 2.. Functionally, part of the Sec protein translocase complex. Interacts with the SecYEG preprotein conducting channel. Has a central role in coupling the hydrolysis of ATP to the transfer of proteins into and across the cell membrane, serving as an ATP-driven molecular motor driving the stepwise translocation of polypeptide chains across the membrane. In Mycobacterium avium (strain 104), this protein is Protein translocase subunit SecA.